The following is a 126-amino-acid chain: Small ribosomal subunit protein uS13 (126 aa).

The interval 96 to 126 (LPVRGQQTKTNARTRKGRRKGTVANKKKVSK) is disordered. Residues 107-126 (ARTRKGRRKGTVANKKKVSK) are compositionally biased toward basic residues.

The protein belongs to the universal ribosomal protein uS13 family. Part of the 30S ribosomal subunit. Forms a loose heterodimer with protein S19. Forms two bridges to the 50S subunit in the 70S ribosome.

Its function is as follows. Located at the top of the head of the 30S subunit, it contacts several helices of the 16S rRNA. In the 70S ribosome it contacts the 23S rRNA (bridge B1a) and protein L5 of the 50S subunit (bridge B1b), connecting the 2 subunits; these bridges are implicated in subunit movement. Contacts the tRNAs in the A and P-sites. This chain is Small ribosomal subunit protein uS13, found in Hydrogenobaculum sp. (strain Y04AAS1).